We begin with the raw amino-acid sequence, 201 residues long: MSRYRGPRFKKIRRLGALPGLTSKRPKAGSDLRNQSRSVKKSQYRIRLEEKQKLRFHYGLTERQLLKYVRIAGKAKGSTGQVLLQLLEMRLDNILFRLGMALTIPQARQLVNHGHILVNGRIVDIPSYRCKPRDIITVKDEQNSRTLVQNLIDSSAPEELPNHLTLHTFQYEGLVNQIIDRKCVGLKINELLVVEYYSRQT.

The S4 RNA-binding domain maps to 89–152 (MRLDNILFRL…NSRTLVQNLI (64 aa)).

This sequence belongs to the universal ribosomal protein uS4 family. As to quaternary structure, part of the 30S ribosomal subunit. Contacts protein S5. The interaction surface between S4 and S5 is involved in control of translational fidelity.

It localises to the plastid. The protein localises to the chloroplast. In terms of biological role, one of the primary rRNA binding proteins, it binds directly to 16S rRNA where it nucleates assembly of the body of the 30S subunit. Functionally, with S5 and S12 plays an important role in translational accuracy. This Crucihimalaya wallichii (Rock-cress) protein is Small ribosomal subunit protein uS4c (rps4).